A 266-amino-acid polypeptide reads, in one-letter code: Potassium/proton antiporter CemA (266 aa).

Transmembrane regions (helical) follow at residues 46 to 66 (VIVSVRCLITLIFVPLFINIL), 151 to 171 (FLSFLSLSVVFLLLKPQIIIL), and 226 to 246 (FMSLFVATFPVFLDTVFKYWI).

Belongs to the CemA family.

The protein localises to the plastid. It is found in the chloroplast inner membrane. The catalysed reaction is K(+)(in) + H(+)(out) = K(+)(out) + H(+)(in). In terms of biological role, contributes to K(+)/H(+) antiport activity by supporting proton efflux to control proton extrusion and homeostasis in chloroplasts in a light-dependent manner to modulate photosynthesis. Prevents excessive induction of non-photochemical quenching (NPQ) under continuous-light conditions. Indirectly promotes efficient inorganic carbon uptake into chloroplasts. The polypeptide is Potassium/proton antiporter CemA (Chlorella vulgaris (Green alga)).